The primary structure comprises 1179 residues: Integrin alpha-7 (1179 aa).

A signal peptide spans Met1–Ala33. The Extracellular portion of the chain corresponds to Phe34 to Glu1076. FG-GAP repeat units follow at residues Val38–Cys103, Arg110–Glu175, Glu185–Leu238, Asp292–Leu349, Ile350–Asp411, Ile412–Val467, and Gln471–Arg530. N-linked (GlcNAc...) asparagine glycosylation occurs at Asn86. Intrachain disulfides connect Cys94/Cys103, Cys140/Cys163, and Cys184/Cys197. 13 residues coordinate Ca(2+): Asp372, Asn374, Asp376, Asp380, Asp434, Asn436, Asp438, Asp442, Asp492, Asp494, Asn496, Tyr498, and Asp500. Disulfide bonds link Cys539–Cys546, Cys552–Cys615, Cys681–Cys687, Cys781–Cys792, Cys939–Cys993, and Cys999–Cys1004. An N-linked (GlcNAc...) asparagine glycan is attached at Asn784. The span at Ser952–Gly961 shows a compositional bias: basic and acidic residues. The segment at Ser952–Trp978 is disordered. N-linked (GlcNAc...) asparagine glycosylation is present at Asn988. N-linked (GlcNAc...) asparagine glycans are attached at residues Asn1023 and Asn1043. A helical transmembrane segment spans residues Gly1077–Trp1102. The Cytoplasmic portion of the chain corresponds to Lys1103–Ala1179. The GFFKR motif signature appears at Gly1105–Arg1109. Residues Lys1134–Gly1153 are disordered. Over residues Gly1139–Glu1152 the composition is skewed to polar residues. Repeat copies occupy residues Asp1155–Pro1158, Asp1163–Pro1166, and Asp1171–Pro1174. The 3 X 4 AA repeats of D-X-H-P stretch occupies residues Asp1155–Pro1174.

Belongs to the integrin alpha chain family. Heterodimer of an alpha and a beta subunit. The alpha subunit is composed of a heavy and a light chain linked by a disulfide bond. Alpha-7 associates with beta-1. Interacts with COMP. Interacts (via C-terminus intracellular tail region) with CIB1; the interaction is stabilized/increased in a calcium- and magnesium-dependent manner. Post-translationally, ADP-ribosylated on at least two sites of the extracellular domain in skeletal myotubes (in vitro). In terms of processing, no proteolytic cleavage to produce the 70 kDa form is seen due to the presence of a Gly instead of an arginine residue at position 647. Isoforms containing segment X2 are found in adult heart, lung and skeletal muscle. Isoforms containing segment X1 are expressed in adult heart, lung and in proliferating skeletal myoblasts but not in adult skeletal muscle. Isoforms containing segment a are exclusively found in skeletal muscle. Isoforms containing segment B are widely expressed. In muscle fibers isoforms containing segment A and B are expressed at myotendinous and neuromuscular junctions; isoforms containing segment C are expressed at neuromuscular junctions and at extrasynaptic sites.

The protein localises to the membrane. Functionally, integrin alpha-7/beta-1 is the primary laminin receptor on skeletal myoblasts and adult myofibers. During myogenic differentiation, it may induce changes in the shape and mobility of myoblasts, and facilitate their localization at laminin-rich sites of secondary fiber formation. Involved in the maintenance of the myofibers cytoarchitecture as well as for their anchorage, viability and functional integrity. Mice carrying a ITGA7 null allele are viable and fertile, but show progressive muscular dystrophy starting soon after birth, but with a distinct variability in different muscle types. Required to promote contractile phenotype acquisition in differentiated airway smooth muscle (ASM) cells. Acts as a Schwann cell receptor for laminin-2. Acts as a receptor of COMP and mediates its effect on vascular smooth muscle cells (VSMCs) maturation. This chain is Integrin alpha-7 (Itga7), found in Mus musculus (Mouse).